A 1479-amino-acid polypeptide reads, in one-letter code: Chromosome partition protein MukB (1479 aa).

34–41 serves as a coordination point for ATP; the sequence is GGNGAGKS. 2 coiled-coil regions span residues 138 to 163 and 331 to 664; these read ETLN…MEGV and QAAS…RLSQ. The segment at 665 to 782 is flexible hinge; the sequence is PGGSEDPRLN…ALPLFGRAAR (118 aa). Coiled-coil stretches lie at residues 831–1112 and 1206–1257; these read DDPE…TAKA and VEAI…MLNQ.

This sequence belongs to the SMC family. MukB subfamily. As to quaternary structure, homodimerization via its hinge domain. Binds to DNA via its C-terminal region. Interacts, and probably forms a ternary complex, with MukE and MukF via its C-terminal region. The complex formation is stimulated by calcium or magnesium. Interacts with tubulin-related protein FtsZ.

The protein resides in the cytoplasm. The protein localises to the nucleoid. Functionally, plays a central role in chromosome condensation, segregation and cell cycle progression. Functions as a homodimer, which is essential for chromosome partition. Involved in negative DNA supercoiling in vivo, and by this means organize and compact chromosomes. May achieve or facilitate chromosome segregation by condensation DNA from both sides of a centrally located replisome during cell division. In Klebsiella pneumoniae, this protein is Chromosome partition protein MukB.